The primary structure comprises 400 residues: tRNA(Met) cytidine acetate ligase (400 aa).

ATP contacts are provided by residues 7–20 (IVEYNPFHNGHLYH), Gly-101, Asn-159, and 184–185 (RI).

This sequence belongs to the TmcAL family.

Its subcellular location is the cytoplasm. The catalysed reaction is cytidine(34) in elongator tRNA(Met) + acetate + ATP = N(4)-acetylcytidine(34) in elongator tRNA(Met) + AMP + diphosphate. In terms of biological role, catalyzes the formation of N(4)-acetylcytidine (ac(4)C) at the wobble position of elongator tRNA(Met), using acetate and ATP as substrates. First activates an acetate ion to form acetyladenylate (Ac-AMP) and then transfers the acetyl group to tRNA to form ac(4)C34. The chain is tRNA(Met) cytidine acetate ligase from Caldicellulosiruptor bescii (strain ATCC BAA-1888 / DSM 6725 / KCTC 15123 / Z-1320) (Anaerocellum thermophilum).